A 205-amino-acid polypeptide reads, in one-letter code: Urease accessory protein UreG (205 aa).

14–21 (GPVGSGKT) provides a ligand contact to GTP.

The protein belongs to the SIMIBI class G3E GTPase family. UreG subfamily. In terms of assembly, homodimer. UreD, UreF and UreG form a complex that acts as a GTP-hydrolysis-dependent molecular chaperone, activating the urease apoprotein by helping to assemble the nickel containing metallocenter of UreC. The UreE protein probably delivers the nickel.

Its subcellular location is the cytoplasm. In terms of biological role, facilitates the functional incorporation of the urease nickel metallocenter. This process requires GTP hydrolysis, probably effectuated by UreG. The protein is Urease accessory protein UreG of Citrobacter koseri (strain ATCC BAA-895 / CDC 4225-83 / SGSC4696).